Reading from the N-terminus, the 209-residue chain is Ribosomal RNA large subunit methyltransferase E (209 aa).

S-adenosyl-L-methionine is bound by residues glycine 60, tryptophan 62, aspartate 80, aspartate 96, and aspartate 121. Residue lysine 161 is the Proton acceptor of the active site. Positions 182 to 196 (VQMRKPSSSRDRSRE) are enriched in basic and acidic residues. The segment at 182-209 (VQMRKPSSSRDRSREQYLLGRGFRGRSE) is disordered.

Belongs to the class I-like SAM-binding methyltransferase superfamily. RNA methyltransferase RlmE family.

It is found in the cytoplasm. The catalysed reaction is uridine(2552) in 23S rRNA + S-adenosyl-L-methionine = 2'-O-methyluridine(2552) in 23S rRNA + S-adenosyl-L-homocysteine + H(+). Functionally, specifically methylates the uridine in position 2552 of 23S rRNA at the 2'-O position of the ribose in the fully assembled 50S ribosomal subunit. In Pseudomonas fluorescens (strain ATCC BAA-477 / NRRL B-23932 / Pf-5), this protein is Ribosomal RNA large subunit methyltransferase E.